A 947-amino-acid polypeptide reads, in one-letter code: Serine-aspartate repeat-containing protein C (947 aa).

Residues 1–50 (MNNKKTATNRKGMIPNRLNKFSIRKYSVGTASILVGTTLIFGLSGHEAKA) form the signal peptide. Positions 51-164 (AEHTNGELNQ…STTPKTTTIK (114 aa)) are disordered. The tract at residues 51–495 (AEHTNGELNQ…GSSTANGDQK (445 aa)) is ligand binding A region. The span at 56–71 (GELNQSKNETTAPSEN) shows a compositional bias: polar residues. Residues 72–83 (KTTKKVDSRQLK) are compositionally biased toward basic and acidic residues. Positions 84 to 155 (DNTQTATADQ…SNLTQAKDVS (72 aa)) are enriched in polar residues. 2 CNA-B domains span residues 496-606 (KYNL…YKTP) and 607-717 (KYSL…EEET). Residues 678–927 (TQTGTNTTED…NNSNNGTLFG (250 aa)) form a disordered region. 2 stretches are compositionally biased toward acidic residues: residues 685–695 (TEDDKDADGGE) and 712–886 (YYEE…DSDS). The LPXTG sorting signal signature appears at 910-914 (LPETG). Low complexity predominate over residues 912 to 927 (ETGSENNNSNNGTLFG). At Thr913 the chain carries Pentaglycyl murein peptidoglycan amidated threonine. The propeptide at 914-947 (GSENNNSNNGTLFGGLFAALGSLLLFGRRKKQNK) is removed by sortase.

The protein belongs to the serine-aspartate repeat-containing protein (SDr) family. As to quaternary structure, homodimerizes; via N2-Domain. Interacts with host NRXN1; this interaction mediates bacterial attachment to host cells.

The protein resides in the secreted. Its subcellular location is the cell wall. Its function is as follows. Cell surface-associated calcium-binding protein which plays an important role in adhesion and pathogenesis. Mediates interactions with components of the extracellular matrix such as host NRXN1 to promote bacterial adhesion. This Staphylococcus aureus (strain COL) protein is Serine-aspartate repeat-containing protein C (sdrC).